Consider the following 160-residue polypeptide: Ribosome maturation factor RimP (160 aa).

This sequence belongs to the RimP family.

It is found in the cytoplasm. Its function is as follows. Required for maturation of 30S ribosomal subunits. The polypeptide is Ribosome maturation factor RimP (Citrifermentans bemidjiense (strain ATCC BAA-1014 / DSM 16622 / JCM 12645 / Bem) (Geobacter bemidjiensis)).